Here is a 177-residue protein sequence, read N- to C-terminus: Acireductone dioxygenase (177 aa).

Residues H99, H101, E105, and H143 each coordinate Fe(2+). Ni(2+) contacts are provided by H99, H101, E105, and H143.

The protein belongs to the acireductone dioxygenase (ARD) family. Monomer. The cofactor is Fe(2+). It depends on Ni(2+) as a cofactor.

The enzyme catalyses 1,2-dihydroxy-5-(methylsulfanyl)pent-1-en-3-one + O2 = 3-(methylsulfanyl)propanoate + CO + formate + 2 H(+). It carries out the reaction 1,2-dihydroxy-5-(methylsulfanyl)pent-1-en-3-one + O2 = 4-methylsulfanyl-2-oxobutanoate + formate + 2 H(+). It functions in the pathway amino-acid biosynthesis; L-methionine biosynthesis via salvage pathway; L-methionine from S-methyl-5-thio-alpha-D-ribose 1-phosphate: step 5/6. In terms of biological role, catalyzes 2 different reactions between oxygen and the acireductone 1,2-dihydroxy-3-keto-5-methylthiopentene (DHK-MTPene) depending upon the metal bound in the active site. Fe-containing acireductone dioxygenase (Fe-ARD) produces formate and 2-keto-4-methylthiobutyrate (KMTB), the alpha-ketoacid precursor of methionine in the methionine recycle pathway. Ni-containing acireductone dioxygenase (Ni-ARD) produces methylthiopropionate, carbon monoxide and formate, and does not lie on the methionine recycle pathway. In Leptospira interrogans serogroup Icterohaemorrhagiae serovar copenhageni (strain Fiocruz L1-130), this protein is Acireductone dioxygenase.